The chain runs to 334 residues: ADP-L-glycero-D-manno-heptose-6-epimerase (334 aa).

Residues Phe-11–Ile-12, Asp-32–Asn-33, Lys-39, Lys-54, Gln-77–Ser-81, and Asn-94 each bind NADP(+). Tyr-141 acts as the Proton acceptor in catalysis. Lys-145 contributes to the NADP(+) binding site. Asn-171 contacts substrate. The NADP(+) site is built by Val-172 and Lys-180. Lys-180 (proton acceptor) is an active-site residue. Substrate-binding positions include Arg-182, His-189, Phe-203 to Asn-206, Arg-216, and Tyr-295.

It belongs to the NAD(P)-dependent epimerase/dehydratase family. HldD subfamily. As to quaternary structure, homopentamer. Requires NADP(+) as cofactor.

It carries out the reaction ADP-D-glycero-beta-D-manno-heptose = ADP-L-glycero-beta-D-manno-heptose. Its pathway is nucleotide-sugar biosynthesis; ADP-L-glycero-beta-D-manno-heptose biosynthesis; ADP-L-glycero-beta-D-manno-heptose from D-glycero-beta-D-manno-heptose 7-phosphate: step 4/4. It functions in the pathway bacterial outer membrane biogenesis; LOS core biosynthesis. Its function is as follows. Catalyzes the interconversion between ADP-D-glycero-beta-D-manno-heptose and ADP-L-glycero-beta-D-manno-heptose via an epimerization at carbon 6 of the heptose. The protein is ADP-L-glycero-D-manno-heptose-6-epimerase of Neisseria meningitidis serogroup A / serotype 4A (strain DSM 15465 / Z2491).